Here is a 121-residue protein sequence, read N- to C-terminus: D-ornithine 4,5-aminomutase subunit alpha (121 aa).

Heterotetramer of 2 alpha (OraS) and 2 beta (OraE) subunits.

The catalysed reaction is D-ornithine = (2R,4S)-2,4-diaminopentanoate. Its activity is regulated as follows. Increased activity in the presence of dithiothreitol (DTT) in vitro. Inhibited by 1 mM potassium phosphate and potassium chloride. Inhibited by L-alpha-ornithine, D,L-alpha-lysine, L-beta-lysine (50%-60%), L-alpha-lysine (26%) and by delta-amino-n-valeric acid to a lesser extent. Significant decrease in activity is observed in the presence of 0.2 mM p-chloromercuribenzoate, N-ethylmaleimide and also by 2 mM iodoacetate to a lesser extent but not inhibited by arsenite. Component of a complex that catalyzes the reversible migration of the omega amino group of D-ornithine to C-4 to form (2R,4S)-2,4-diaminopentanoic acid. The role of OraS remains obscure; however, it seems to be required for a correct folding of the OraE subunit. The complex is active only on D-ornithine and 2,4-diaminopentanoic acid and not active on L-ornithine, L-beta-lysine, L-alpha-lysine or D-alpha-lysine. This Acetoanaerobium sticklandii (strain ATCC 12662 / DSM 519 / JCM 1433 / CCUG 9281 / NCIMB 10654 / HF) (Clostridium sticklandii) protein is D-ornithine 4,5-aminomutase subunit alpha (oraS).